Here is an 83-residue protein sequence, read N- to C-terminus: Mu-theraphotoxin-Hhn2b 2 (83 aa).

Residues 1 to 21 (MKASMFLALAGLVLLFVVCYA) form the signal peptide. The propeptide occupies 22 to 48 (SESEEKEFPRELISKIFTVDDFKGEER). Disulfide bonds link Cys-50/Cys-65, Cys-57/Cys-70, and Cys-64/Cys-77. Leu-81 bears the Leucine amide mark.

It belongs to the neurotoxin 10 (Hwtx-1) family. 14 (Hntx-1) subfamily. Monomer. Expressed by the venom gland.

It localises to the secreted. Weakly blocks the rat SCN2A/SCN1B (Nav1.2/beta-1) sodium channel (IC(50)=68 uM) and the insect sodium channel para/tipE (IC(50)=4.3 uM), without altering the activation or inactivation kinetics (depressant toxin). This is Mu-theraphotoxin-Hhn2b 2 from Cyriopagopus hainanus (Chinese bird spider).